The primary structure comprises 259 residues: MAKEVSLSNTSAGGAALDILGLWKGFDGTEVLKGLSLNVPAGQFLSIVGRSGCGKSTLLRLIADLETIDGGTIQIDGNPLSEISGEVRMMFQDARLLPWRTVLQNIGIGLPNPWQNRARKALAEVGLSEHADKWPSQLSGGQRQRVALARALIHRPRLLLLDEPLGALDALTRLEMQDLIESIRARHGFTVLLVTHDVEEAIALGDRVIVMEQGEIVLELDIELARLRVRSSQAFTSIEEKVLSRVLNSRNAPSGDDCK.

The region spanning 17–238 (LDILGLWKGF…VRSSQAFTSI (222 aa)) is the ABC transporter domain. Residue 49–56 (GRSGCGKS) coordinates ATP.

This sequence belongs to the ABC transporter superfamily. Aliphatic sulfonates importer (TC 3.A.1.17.2) family. The complex is composed of two ATP-binding proteins (SsuB), two transmembrane proteins (SsuC) and a solute-binding protein (SsuA).

It localises to the cell inner membrane. The enzyme catalyses ATP + H2O + aliphatic sulfonate-[sulfonate-binding protein]Side 1 = ADP + phosphate + aliphatic sulfonateSide 2 + [sulfonate-binding protein]Side 1.. In terms of biological role, part of the ABC transporter complex SsuABC involved in aliphatic sulfonates import. Responsible for energy coupling to the transport system. The polypeptide is Aliphatic sulfonates import ATP-binding protein SsuB 2 (Agrobacterium fabrum (strain C58 / ATCC 33970) (Agrobacterium tumefaciens (strain C58))).